The chain runs to 109 residues: Nucleoid-associated protein SO_2014 (109 aa).

This sequence belongs to the YbaB/EbfC family. Homodimer.

It is found in the cytoplasm. The protein resides in the nucleoid. Functionally, binds to DNA and alters its conformation. May be involved in regulation of gene expression, nucleoid organization and DNA protection. The polypeptide is Nucleoid-associated protein SO_2014 (Shewanella oneidensis (strain ATCC 700550 / JCM 31522 / CIP 106686 / LMG 19005 / NCIMB 14063 / MR-1)).